The chain runs to 137 residues: MLQPKRTKFRKAHKGRIKGAAKGGFTLNFGSYGLKALQPERVTARQIEATRRAITRHMKRAGRVWIRIFPDVPVSKKPTEVRMGKGKGSPEFWACKVKPGRIMFEIDGVPENVAREALELGAAKLPVKTKIVARLGE.

This sequence belongs to the universal ribosomal protein uL16 family. In terms of assembly, part of the 50S ribosomal subunit.

Binds 23S rRNA and is also seen to make contacts with the A and possibly P site tRNAs. This Maricaulis maris (strain MCS10) (Caulobacter maris) protein is Large ribosomal subunit protein uL16.